A 586-amino-acid polypeptide reads, in one-letter code: Madf and zinc finger protein 1 (586 aa).

The interval 161–194 (FMSEDDLAPPRKPGRPPRRTRPGQVFKFKVSFIR) is involved in interaction with Cp190. The segment at residues 201-292 (HLIQAYKEHP…KCEFLSVAPV (92 aa)) is a DNA-binding region (MADF 1). The interval 294-319 (TPRENEEDNDLTAIKLNFKEENLITT) is involved in interaction with Cp190. The segment at residues 320-413 (SFIETYANYP…MCSFLPAKGS (94 aa)) is a DNA-binding region (MADF 2). 6 C2H2-type zinc fingers span residues 418 to 441 (LYCD…VKAH), 448 to 471 (YLCS…LRSH), 476 to 498 (LKCQ…TLIH), 504 to 527 (HVCD…NGVH), 533 to 555 (YSCN…IKGH), and 561 to 583 (KKCE…RRSH).

Interacts (via regions flanking MADF domain 1) with Cp190 (via regions between the BTB domain and first zinc finger domain); the interaction is probably direct and is essential for protein function.

The protein resides in the nucleus. It localises to the chromosome. Its subcellular location is the nucleoplasm. Functionally, chromatin-binding protein involved in the organization of active promoters and insulators. Essential for the activity of heterochromatin promoters; primarily binds to specific motifs within promoters of housekeeping genes. May also associate to a lesser extent with promoters in euchromatin. Mediates recruitment of Cp190, a multifunctional protein involved in the recruitment of transcription complexes, the creation of open chromatin regions and the activity of insulators. Cooperates with pita and su(Hw) to recruit Cp190 and regulate insulator function at the front-ultraabdominal (Fub) boundary. May cooperate with other C2H2 zinc finger proteins, such as M1BP, to recruit CP190 to promoters. May be involved in cellular organization and development of the eye. This is Madf and zinc finger protein 1 from Drosophila melanogaster (Fruit fly).